The primary structure comprises 201 residues: UPF0056 membrane protein PYRAB13050 (201 aa).

The next 6 membrane-spanning stretches (helical) occupy residues 8–28, 49–69, 73–93, 111–131, 140–160, and 181–201; these read FAVLYVGLFAITNPVGAVPIF, ITVLVTLLTFALVGKWIFKFF, VDAFAIAGGILLFRMGMEMLS, VAVIPLAIPLISGPGAITTVM, PIVIATIIAIGISVYIILASG, and LILTSMAIQMIINGIKGAFGI.

It belongs to the UPF0056 (MarC) family.

It is found in the cell membrane. The polypeptide is UPF0056 membrane protein PYRAB13050 (Pyrococcus abyssi (strain GE5 / Orsay)).